Here is a 551-residue protein sequence, read N- to C-terminus: Pentatricopeptide repeat-containing protein At3g13150 (551 aa).

Positions 22–67 (ATAKSAKPRSQTKSTKFPSKLKASTASVGDGGQSSNDAKDSKNSKL) are disordered. A compositionally biased stretch (polar residues) spans 29–48 (PRSQTKSTKFPSKLKASTAS). Residues 58 to 67 (DAKDSKNSKL) are compositionally biased toward basic and acidic residues. 7 PPR repeats span residues 121 to 155 (SEDFVIRIMLLYGYSGMAEHAHKLFDEMPELNCER), 156 to 191 (TVKSFNALLSAYVNSKKLDEAMKTFKELPEKLGITP), 192 to 226 (DLVTYNTMIKALCRKGSMDDILSIFEELEKNGFEP), 227 to 261 (DLISFNTLLEEFYRRELFVEGDRIWDLMKSKNLSP), 262 to 296 (NIRSYNSRVRGLTRNKKFTDALNLIDVMKTEGISP), 297 to 331 (DVHTYNALITAYRVDNNLEEVMKCYNEMKEKGLTP), and 332 to 366 (DTVTYCMLIPLLCKKGDLDRAVEVSEEAIKHKLLS). 2 disordered regions span residues 409-435 (GKKKTTSSPVSSSAKTTSTPVSSSPDT) and 449-551 (SSSD…LLDD). The span at 415-435 (SSPVSSSAKTTSTPVSSSPDT) shows a compositional bias: low complexity.

This sequence belongs to the PPR family. P subfamily.

The polypeptide is Pentatricopeptide repeat-containing protein At3g13150 (Arabidopsis thaliana (Mouse-ear cress)).